The sequence spans 332 residues: MSRILDNEIMGDEELVERTLRPQYLREYIGQDKVKDQLQIFIEAAKMRDEALDHVLLFGPPGLGKTTMAFVIANELGVNLKQTSGPVIEKAGDLVAILNELEPGDVLFIDEIHRLPMSVEEVLYSAMEDFYIDIMIGAGEGSRSVHLELPPFTLIGATTRAGMLSNPLRARFGITGHMEYYAHADLTEIVERTADIFEMEITHEAASELALRSRGTPRIANRLLKRVRDFAQIMGNGVIDDIITDKALTMLDVDHEGLDYVDQKILRTMIEMYSGGPVGLGTLSVNIAEERETVEDMYEPYLIQKGFIMRTRSGRVATAKAYEHLGYEYSEK.

The segment at 1-181 is large ATPase domain (RuvB-L); that stretch reads MSRILDNEIM…FGITGHMEYY (181 aa). ATP contacts are provided by residues L20, R21, G62, K65, T66, T67, 128 to 130, R171, Y181, and R218; that span reads EDF. T66 contributes to the Mg(2+) binding site. The tract at residues 182 to 252 is small ATPAse domain (RuvB-S); it reads AHADLTEIVE…ITDKALTMLD (71 aa). The tract at residues 255 to 332 is head domain (RuvB-H); it reads HEGLDYVDQK…EHLGYEYSEK (78 aa). DNA is bound by residues R291, R310, R312, and R315.

Belongs to the RuvB family. As to quaternary structure, homohexamer. Forms an RuvA(8)-RuvB(12)-Holliday junction (HJ) complex. HJ DNA is sandwiched between 2 RuvA tetramers; dsDNA enters through RuvA and exits via RuvB. An RuvB hexamer assembles on each DNA strand where it exits the tetramer. Each RuvB hexamer is contacted by two RuvA subunits (via domain III) on 2 adjacent RuvB subunits; this complex drives branch migration. In the full resolvosome a probable DNA-RuvA(4)-RuvB(12)-RuvC(2) complex forms which resolves the HJ.

The protein localises to the cytoplasm. The enzyme catalyses ATP + H2O = ADP + phosphate + H(+). In terms of biological role, the RuvA-RuvB-RuvC complex processes Holliday junction (HJ) DNA during genetic recombination and DNA repair, while the RuvA-RuvB complex plays an important role in the rescue of blocked DNA replication forks via replication fork reversal (RFR). RuvA specifically binds to HJ cruciform DNA, conferring on it an open structure. The RuvB hexamer acts as an ATP-dependent pump, pulling dsDNA into and through the RuvAB complex. RuvB forms 2 homohexamers on either side of HJ DNA bound by 1 or 2 RuvA tetramers; 4 subunits per hexamer contact DNA at a time. Coordinated motions by a converter formed by DNA-disengaged RuvB subunits stimulates ATP hydrolysis and nucleotide exchange. Immobilization of the converter enables RuvB to convert the ATP-contained energy into a lever motion, pulling 2 nucleotides of DNA out of the RuvA tetramer per ATP hydrolyzed, thus driving DNA branch migration. The RuvB motors rotate together with the DNA substrate, which together with the progressing nucleotide cycle form the mechanistic basis for DNA recombination by continuous HJ branch migration. Branch migration allows RuvC to scan DNA until it finds its consensus sequence, where it cleaves and resolves cruciform DNA. The protein is Holliday junction branch migration complex subunit RuvB of Streptococcus pneumoniae serotype 2 (strain D39 / NCTC 7466).